A 111-amino-acid chain; its full sequence is Cell cycle protein GpsB (111 aa).

Residues I38–V72 adopt a coiled-coil conformation.

It belongs to the GpsB family. In terms of assembly, forms polymers through the coiled coil domains. Interacts with PBP1, MreC and EzrA.

Its subcellular location is the cytoplasm. Divisome component that associates with the complex late in its assembly, after the Z-ring is formed, and is dependent on DivIC and PBP2B for its recruitment to the divisome. Together with EzrA, is a key component of the system that regulates PBP1 localization during cell cycle progression. Its main role could be the removal of PBP1 from the cell pole after pole maturation is completed. Also contributes to the recruitment of PBP1 to the division complex. Not essential for septum formation. The polypeptide is Cell cycle protein GpsB (Bacillus cereus (strain G9842)).